The following is a 549-amino-acid chain: Glucose-6-phosphate isomerase (549 aa).

The active-site Proton donor is the Glu-353. Residues His-384 and Lys-512 contribute to the active site.

The protein belongs to the GPI family.

The protein resides in the cytoplasm. The enzyme catalyses alpha-D-glucose 6-phosphate = beta-D-fructose 6-phosphate. The protein operates within carbohydrate biosynthesis; gluconeogenesis. It functions in the pathway carbohydrate degradation; glycolysis; D-glyceraldehyde 3-phosphate and glycerone phosphate from D-glucose: step 2/4. Functionally, catalyzes the reversible isomerization of glucose-6-phosphate to fructose-6-phosphate. This chain is Glucose-6-phosphate isomerase, found in Solidesulfovibrio magneticus (strain ATCC 700980 / DSM 13731 / RS-1) (Desulfovibrio magneticus).